A 252-amino-acid chain; its full sequence is Autophagy-related protein 27 (252 aa).

The signal sequence occupies residues Met1–Ala15. Positions Phe16 to Thr161 constitute an MRH domain. At Phe16–Ser176 the chain is on the lumenal side. Cystine bridges form between Cys18-Cys57, Cys66-Cys73, and Cys130-Cys159. An N-linked (GlcNAc...) asparagine glycan is attached at Asn49. A helical membrane pass occupies residues Trp177–Gly197. At Gly198–Val252 the chain is on the cytoplasmic side.

The protein belongs to the ATG27 family.

The protein resides in the cytoplasmic vesicle membrane. Its subcellular location is the golgi apparatus membrane. The protein localises to the mitochondrion membrane. It is found in the preautophagosomal structure membrane. Plays a key role in autophagy. Effector of VPS34 phosphatidylinositol 3-phosphate kinase signaling. Regulates the cytoplasm to vacuole transport (Cvt) vesicle formation. Plays a role in ATG protein retrieval from the pre-autophagosomal structure (PAS) and is especially required for autophagy-dependent cycling of ATG9. Finally, plays an important role in biofilm formation and resistance to antifungal compounds such as fluconazole, itraconazole, terbinafine and caspofungin. This chain is Autophagy-related protein 27, found in Candida albicans (strain SC5314 / ATCC MYA-2876) (Yeast).